Consider the following 172-residue polypeptide: Putative metal-dependent hydrolase OB0782 (172 aa).

3 residues coordinate Zn(2+): histidine 64, histidine 155, and histidine 159.

It belongs to the metal hydrolase YfiT family. Homodimer. The cofactor is Zn(2+).

The protein resides in the cytoplasm. In terms of biological role, possible metal-dependent hydrolase. The chain is Putative metal-dependent hydrolase OB0782 from Oceanobacillus iheyensis (strain DSM 14371 / CIP 107618 / JCM 11309 / KCTC 3954 / HTE831).